The chain runs to 542 residues: Peptide chain release factor 3 (542 aa).

The 270-residue stretch at 14–283 (ERRRNFAIIS…AFLDYALKPA (270 aa)) folds into the tr-type G domain. Residues 23 to 30 (SHPDAGKT), 91 to 95 (DTPGH), and 145 to 148 (NKLD) each bind GTP.

This sequence belongs to the TRAFAC class translation factor GTPase superfamily. Classic translation factor GTPase family. PrfC subfamily.

It is found in the cytoplasm. Functionally, increases the formation of ribosomal termination complexes and stimulates activities of RF-1 and RF-2. It binds guanine nucleotides and has strong preference for UGA stop codons. It may interact directly with the ribosome. The stimulation of RF-1 and RF-2 is significantly reduced by GTP and GDP, but not by GMP. The sequence is that of Peptide chain release factor 3 from Cyanothece sp. (strain PCC 7425 / ATCC 29141).